The sequence spans 261 residues: Proliferating cell nuclear antigen (261 aa).

Lys14, Lys77, and Lys80 each carry N6-acetyllysine. The DNA-binding element occupies 61 to 80 (RCDRNLAMGVNLTSMSKILK). A disulfide bond links Cys135 and Cys162. Lys164 participates in a covalent cross-link: Glycyl lysine isopeptide (Lys-Gly) (interchain with G-Cter in SUMO2); alternate. Residue Lys164 forms a Glycyl lysine isopeptide (Lys-Gly) (interchain with G-Cter in ubiquitin); alternate linkage. Tyr211 carries the post-translational modification Phosphotyrosine; by EGFR. An N6-acetyllysine modification is found at Lys248. Residue Lys254 forms a Glycyl lysine isopeptide (Lys-Gly) (interchain with G-Cter in SUMO2) linkage.

It belongs to the PCNA family. Homotrimer. Interacts with p300/EP300; the interaction occurs on chromatin in UV-irradiated damaged cells. Interacts with CREBBP (via transactivation domain and C-terminus); the interaction occurs on chromatin in UV-irradiated damaged cells. Directly interacts with POLD1, POLD3 and POLD4 subunits of the DNA polymerase delta complex, POLD3 being the major interacting partner; the interaction with POLD3 is inhibited by CDKN1A/p21(CIP1). Forms a complex with activator 1 heteropentamer in the presence of ATP. Interacts with EXO1, POLH, POLK, DNMT1, ERCC5, FEN1, CDC6 and POLDIP2. Interacts with POLB. Interacts with APEX2; this interaction is triggered by reactive oxygen species and increased by misincorporation of uracil in nuclear DNA. Forms a ternary complex with DNTTIP2 and core histone. Interacts with KCTD10 and PPP1R15A. Interacts with SMARCA5/SNF2H. Interacts with BAZ1B/WSTF; the interaction is direct and is required for BAZ1B/WSTF binding to replication foci during S phase. Interacts with HLTF and SHPRH. Interacts with NUDT15; this interaction is disrupted in response to UV irradiation and acetylation. Interacts with CDKN1A/p21(CIP1) and CDT1; interacts via their PIP-box which also recruits the DCX(DTL) complex. The interaction with CDKN1A inhibits POLD3 binding. Interacts with DDX11. Interacts with EGFR; positively regulates PCNA. Interacts with PARPBP. Interacts (when ubiquitinated) with SPRTN; leading to enhance RAD18-mediated PCNA ubiquitination. Interacts (when polyubiquitinated) with ZRANB3. Interacts with SMARCAD1. Interacts with CDKN1C. Interacts with PCLAF (via PIP-box). Interacts with RTEL1 (via PIP-box); the interaction is direct and essential for the suppression of telomere fragility. Interacts with FAM111A (via PIP-box); the interaction is direct and required for PCNA loading on chromatin binding. Interacts with LIG1. Interacts with SETMAR. Interacts with ANKRD17. Interacts with FBXO18/FBH1 (via PIP-box); the interaction recruits the DCX(DTL) complex and promotes ubiquitination and degradation of FBXO18/FBH1. Interacts with POLN. Interacts with SDE2 (via PIP-box); the interaction is direct and prevents ultraviolet light induced monoubiquitination. Component of the replisome complex composed of at least DONSON, MCM2, MCM7, PCNA and TICRR; interaction at least with PCNA occurs during DNA replication. Interacts with MAPK15; the interaction is chromatin binding dependent and prevents MDM2-mediated PCNA destruction by inhibiting the association of PCNA with MDM2. Interacts with PARP10 (via PIP-box). Interacts with DDI2. Interacts with HMCES (via PIP-box). Interacts with TRAIP (via PIP-box). Interacts with UHRF2. Interacts with ALKBH2; this interaction is enhanced during the S-phase of the cell cycle. Interacts with ATAD5; the interaction promotes USP1-mediated PCNA deubiquitination. Interacts (when phosphorylated) with GRB2. Interacts with nuclear UNG; this interaction mediates UNG recruitment to S-phase replication foci. Interacts with ERCC6L2 (via an atypical PIP-box); this interaction facilitates cenrtomeric localization of ERCC6L2. Phosphorylated. Phosphorylation at Tyr-211 by EGFR stabilizes chromatin-associated PCNA. Post-translationally, acetylated by CREBBP and p300/EP300; preferentially acetylated by CREBBP on Lys-80, Lys-13 and Lys-14 and on Lys-77 by p300/EP300 upon loading on chromatin in response to UV irradiation. Lysine acetylation disrupts association with chromatin, hence promoting PCNA ubiquitination and proteasomal degradation in response to UV damage in a CREBBP- and EP300-dependent manner. Acetylation disrupts interaction with NUDT15 and promotes degradation. In terms of processing, ubiquitinated. Following DNA damage, can be either monoubiquitinated to stimulate direct bypass of DNA lesions by specialized DNA polymerases or polyubiquitinated to promote recombination-dependent DNA synthesis across DNA lesions by template switching mechanisms. Following induction of replication stress, monoubiquitinated by the UBE2B-RAD18 complex on Lys-164, leading to recruit translesion (TLS) polymerases, which are able to synthesize across DNA lesions in a potentially error-prone manner. An error-free pathway also exists and requires non-canonical polyubiquitination on Lys-164 through 'Lys-63' linkage of ubiquitin moieties by the E2 complex UBE2N-UBE2V2 and the E3 ligases, HLTF, RNF8 and SHPRH. This error-free pathway, also known as template switching, employs recombination mechanisms to synthesize across the lesion, using as a template the undamaged, newly synthesized strand of the sister chromatid. Monoubiquitination at Lys-164 also takes place in undamaged proliferating cells, and is mediated by the DCX(DTL) complex, leading to enhance PCNA-dependent translesion DNA synthesis. Sumoylated during S phase. Methylated on glutamate residues by ARMT1.

It is found in the nucleus. Auxiliary protein of DNA polymerase delta and epsilon, is involved in the control of eukaryotic DNA replication by increasing the polymerase's processibility during elongation of the leading strand. Induces a robust stimulatory effect on the 3'-5' exonuclease and 3'-phosphodiesterase, but not apurinic-apyrimidinic (AP) endonuclease, APEX2 activities. Has to be loaded onto DNA in order to be able to stimulate APEX2. Plays a key role in DNA damage response (DDR) by being conveniently positioned at the replication fork to coordinate DNA replication with DNA repair and DNA damage tolerance pathways. Acts as a loading platform to recruit DDR proteins that allow completion of DNA replication after DNA damage and promote postreplication repair: Monoubiquitinated PCNA leads to recruitment of translesion (TLS) polymerases, while 'Lys-63'-linked polyubiquitination of PCNA is involved in error-free pathway and employs recombination mechanisms to synthesize across the lesion. The chain is Proliferating cell nuclear antigen (PCNA) from Bos taurus (Bovine).